A 60-amino-acid chain; its full sequence is Large ribosomal subunit protein bL32 (60 aa).

Belongs to the bacterial ribosomal protein bL32 family.

The protein is Large ribosomal subunit protein bL32 of Streptococcus mutans serotype c (strain ATCC 700610 / UA159).